Here is a 479-residue protein sequence, read N- to C-terminus: Long-chain alcohol oxidase (479 aa).

The region spanning 14-183 (QILRPSAAYT…LAVRIRCREQ (170 aa)) is the FAD-binding PCMH-type domain. His-49 carries the pros-8alpha-FAD histidine modification. FAD-binding positions include Thr-113, Gly-116, 120–123 (TGTH), and Ile-173. Residues 241-258 (LYWLGTMDYGLILQILFL) form a helical membrane-spanning segment. 2 residues coordinate FAD: Arg-369 and His-425.

It belongs to the oxygen-dependent FAD-linked oxidoreductase family. FAD is required as a cofactor.

It is found in the cell membrane. It carries out the reaction a long-chain primary fatty alcohol + O2 = a long-chain fatty aldehyde + H2O2. The catalysed reaction is dodecan-1-ol + O2 = dodecanal + H2O2. It catalyses the reaction tetradecan-1-ol + O2 = tetradecanal + H2O2. The enzyme catalyses octan-1-ol + O2 = octanal + H2O2. It carries out the reaction decan-1-ol + O2 = decanal + H2O2. It participates in lipid metabolism; fatty acid metabolism. Functionally, in vitro catalyzes the oxidation of a range of fatty alcohols having a carbon chain length of six and above, with a reduction of O2 to H2O2. Shows the highest activity with 1-dodecanol. Is likely involved in lipid metabolism. The sequence is that of Long-chain alcohol oxidase from Uncultured marine euryarchaeote.